The sequence spans 192 residues: Phosphoheptose isomerase (192 aa).

Residues 34–192 enclose the SIS domain; the sequence is VVDAYKAGNK…VERELFVKGK (159 aa). 49–51 contributes to the substrate binding site; the sequence is NGG. His-58 and Glu-62 together coordinate Zn(2+). Substrate contacts are provided by residues Glu-62, 91-92, 117-119, Ser-122, and Gln-169; these read ND and STS. Residues Gln-169 and His-177 each contribute to the Zn(2+) site.

Belongs to the SIS family. GmhA subfamily. Homotetramer. Requires Zn(2+) as cofactor.

The protein resides in the cytoplasm. The catalysed reaction is 2 D-sedoheptulose 7-phosphate = D-glycero-alpha-D-manno-heptose 7-phosphate + D-glycero-beta-D-manno-heptose 7-phosphate. It participates in carbohydrate biosynthesis; D-glycero-D-manno-heptose 7-phosphate biosynthesis; D-glycero-alpha-D-manno-heptose 7-phosphate and D-glycero-beta-D-manno-heptose 7-phosphate from sedoheptulose 7-phosphate: step 1/1. In terms of biological role, catalyzes the isomerization of sedoheptulose 7-phosphate in D-glycero-D-manno-heptose 7-phosphate. The protein is Phosphoheptose isomerase of Citrifermentans bemidjiense (strain ATCC BAA-1014 / DSM 16622 / JCM 12645 / Bem) (Geobacter bemidjiensis).